The following is a 180-amino-acid chain: ATP synthase subunit delta (180 aa).

The protein belongs to the ATPase delta chain family. F-type ATPases have 2 components, F(1) - the catalytic core - and F(0) - the membrane proton channel. F(1) has five subunits: alpha(3), beta(3), gamma(1), delta(1), epsilon(1). F(0) has three main subunits: a(1), b(2) and c(10-14). The alpha and beta chains form an alternating ring which encloses part of the gamma chain. F(1) is attached to F(0) by a central stalk formed by the gamma and epsilon chains, while a peripheral stalk is formed by the delta and b chains.

It is found in the cell membrane. Its function is as follows. F(1)F(0) ATP synthase produces ATP from ADP in the presence of a proton or sodium gradient. F-type ATPases consist of two structural domains, F(1) containing the extramembraneous catalytic core and F(0) containing the membrane proton channel, linked together by a central stalk and a peripheral stalk. During catalysis, ATP synthesis in the catalytic domain of F(1) is coupled via a rotary mechanism of the central stalk subunits to proton translocation. Functionally, this protein is part of the stalk that links CF(0) to CF(1). It either transmits conformational changes from CF(0) to CF(1) or is implicated in proton conduction. The chain is ATP synthase subunit delta from Mycoplasma mobile (strain ATCC 43663 / 163K / NCTC 11711) (Mesomycoplasma mobile).